The chain runs to 275 residues: MIQFTKMHGLGNDFMVVDGITQNVFFSPEQIRRLADRNFGVGFDQLLLVEPPYDPDLDFHYRIFNADGGEVENCGNGARCFARFVRNKGLTNKNKIRVSTSAGKMTLRLERDGTVTVNMGVPVLEPSQIPFKAKKAEKTYLLQTPQQTFLCGAASMGNPHCVLDVEDVANANVAEIGALLTKHERFPRGVNVGFMQVVNAGHIKLRVYERGAAETLACGTGACAAVVVGQIQGKLDQQVQVDLPGGSLTINWEGEGKPLWMTGPAQHVYDGQIQL.

The substrate site is built by Asn-12, Gln-45, and Asn-65. The active-site Proton donor is Cys-74. Substrate contacts are provided by residues 75-76 (GN), Asn-158, Asn-191, and 209-210 (ER). The active-site Proton acceptor is the Cys-218. 219 to 220 (GT) is a substrate binding site.

This sequence belongs to the diaminopimelate epimerase family. As to quaternary structure, homodimer.

It localises to the cytoplasm. It catalyses the reaction (2S,6S)-2,6-diaminopimelate = meso-2,6-diaminopimelate. It participates in amino-acid biosynthesis; L-lysine biosynthesis via DAP pathway; DL-2,6-diaminopimelate from LL-2,6-diaminopimelate: step 1/1. Catalyzes the stereoinversion of LL-2,6-diaminopimelate (L,L-DAP) to meso-diaminopimelate (meso-DAP), a precursor of L-lysine and an essential component of the bacterial peptidoglycan. This chain is Diaminopimelate epimerase, found in Shewanella oneidensis (strain ATCC 700550 / JCM 31522 / CIP 106686 / LMG 19005 / NCIMB 14063 / MR-1).